Reading from the N-terminus, the 477-residue chain is UDP-glycosyltransferase 71K1 (477 aa).

UDP-alpha-D-glucose is bound by residues Ser285, 350–351 (WA), 368–376 (HCGWNSILE), and 390–393 (YAEQ).

Belongs to the UDP-glycosyltransferase family.

Its function is as follows. Glycosyltransferase that possesses chalcone and flavonol 2'-O-glycosyltransferase activity. Converts phloretin to phlorizin (phloretin 2'-O-glucoside), a potent antioxidant. Possesses glycosyltransferase activity toward quercetin, isoliquiritigenin, butein and caffeic acid. The chain is UDP-glycosyltransferase 71K1 from Malus domestica (Apple).